A 155-amino-acid polypeptide reads, in one-letter code: Small ribosomal subunit protein uS7 (155 aa).

Belongs to the universal ribosomal protein uS7 family. Part of the 30S ribosomal subunit. Contacts proteins S9 and S11.

Functionally, one of the primary rRNA binding proteins, it binds directly to 16S rRNA where it nucleates assembly of the head domain of the 30S subunit. Is located at the subunit interface close to the decoding center, probably blocks exit of the E-site tRNA. The polypeptide is Small ribosomal subunit protein uS7 (Thermotoga petrophila (strain ATCC BAA-488 / DSM 13995 / JCM 10881 / RKU-1)).